The primary structure comprises 444 residues: tRNA modification GTPase MnmE (444 aa).

3 residues coordinate (6S)-5-formyl-5,6,7,8-tetrahydrofolate: Arg23, Glu82, and Lys121. A TrmE-type G domain is found at 216–365 (GTSIVLAGLP…LKQALQKWLN (150 aa)). Residue Asn226 participates in K(+) binding. GTP contacts are provided by residues 226 to 231 (NAGKSS), 245 to 251 (TDIPGTT), and 270 to 273 (DSAG). A Mg(2+)-binding site is contributed by Ser230. K(+)-binding residues include Thr245, Ile247, and Thr250. Thr251 serves as a coordination point for Mg(2+). Lys444 contributes to the (6S)-5-formyl-5,6,7,8-tetrahydrofolate binding site.

This sequence belongs to the TRAFAC class TrmE-Era-EngA-EngB-Septin-like GTPase superfamily. TrmE GTPase family. Homodimer. Heterotetramer of two MnmE and two MnmG subunits. It depends on K(+) as a cofactor.

The protein localises to the cytoplasm. Its function is as follows. Exhibits a very high intrinsic GTPase hydrolysis rate. Involved in the addition of a carboxymethylaminomethyl (cmnm) group at the wobble position (U34) of certain tRNAs, forming tRNA-cmnm(5)s(2)U34. The protein is tRNA modification GTPase MnmE of Chlamydia trachomatis serovar A (strain ATCC VR-571B / DSM 19440 / HAR-13).